A 210-amino-acid polypeptide reads, in one-letter code: Molybdenum cofactor guanylyltransferase (210 aa).

Residues 14 to 16 (LAG), lysine 27, asparagine 55, aspartate 73, and aspartate 108 each bind GTP. Residue aspartate 108 coordinates Mg(2+).

The protein belongs to the MobA family. Monomer. Requires Mg(2+) as cofactor.

Its subcellular location is the cytoplasm. It catalyses the reaction Mo-molybdopterin + GTP + H(+) = Mo-molybdopterin guanine dinucleotide + diphosphate. In terms of biological role, transfers a GMP moiety from GTP to Mo-molybdopterin (Mo-MPT) cofactor (Moco or molybdenum cofactor) to form Mo-molybdopterin guanine dinucleotide (Mo-MGD) cofactor. The polypeptide is Molybdenum cofactor guanylyltransferase (Rhodopseudomonas palustris (strain BisB5)).